A 245-amino-acid polypeptide reads, in one-letter code: Sugar fermentation stimulation protein homolog (245 aa).

Belongs to the SfsA family.

The polypeptide is Sugar fermentation stimulation protein homolog (Rhodospirillum rubrum (strain ATCC 11170 / ATH 1.1.1 / DSM 467 / LMG 4362 / NCIMB 8255 / S1)).